Here is a 313-residue protein sequence, read N- to C-terminus: Curved DNA-binding protein (313 aa).

A J domain is found at 5–69 (DYYKILGVSR…EKRKAYDAIG (65 aa)). A disordered region spans residues 71 to 93 (GWKQGQGFTPPPGWESRPGGEGV).

Its subcellular location is the cytoplasm. The protein resides in the nucleoid. In terms of biological role, DNA-binding protein that preferentially recognizes a curved DNA sequence. It is probably a functional analog of DnaJ; displays overlapping activities with DnaJ, but functions under different conditions, probably acting as a molecular chaperone in an adaptive response to environmental stresses other than heat shock. Lacks autonomous chaperone activity; binds native substrates and targets them for recognition by DnaK. Its activity is inhibited by the binding of CbpM. The polypeptide is Curved DNA-binding protein (Coxiella burnetii (strain Dugway 5J108-111)).